Reading from the N-terminus, the 158-residue chain is 2-C-methyl-D-erythritol 2,4-cyclodiphosphate synthase (158 aa).

2 residues coordinate a divalent metal cation: Asp-10 and His-12. 4-CDP-2-C-methyl-D-erythritol 2-phosphate-binding positions include 10-12 (DVH) and 36-37 (HS). His-44 provides a ligand contact to a divalent metal cation. Residues 58 to 60 (DIG), 63 to 67 (FSDTD), and Arg-144 contribute to the 4-CDP-2-C-methyl-D-erythritol 2-phosphate site.

Belongs to the IspF family. Homotrimer. Requires a divalent metal cation as cofactor.

The catalysed reaction is 4-CDP-2-C-methyl-D-erythritol 2-phosphate = 2-C-methyl-D-erythritol 2,4-cyclic diphosphate + CMP. It functions in the pathway isoprenoid biosynthesis; isopentenyl diphosphate biosynthesis via DXP pathway; isopentenyl diphosphate from 1-deoxy-D-xylulose 5-phosphate: step 4/6. Its function is as follows. Involved in the biosynthesis of isopentenyl diphosphate (IPP) and dimethylallyl diphosphate (DMAPP), two major building blocks of isoprenoid compounds. Catalyzes the conversion of 4-diphosphocytidyl-2-C-methyl-D-erythritol 2-phosphate (CDP-ME2P) to 2-C-methyl-D-erythritol 2,4-cyclodiphosphate (ME-CPP) with a corresponding release of cytidine 5-monophosphate (CMP). This is 2-C-methyl-D-erythritol 2,4-cyclodiphosphate synthase from Burkholderia vietnamiensis (strain G4 / LMG 22486) (Burkholderia cepacia (strain R1808)).